A 191-amino-acid chain; its full sequence is MKKQLLAALIGGFLLAPMAASAADYVIDREGAHASITFKVSHLGYSYVVGRFNDFSGDFSYDAKNPTAAKVNVKVNTLSVDSNHAERDKHIRSGDFLNTAKFAEATFVSTSVEDKGNGDMVITGNFTLNGVTKPLAIQAHAVGEGQDPWGGYRAGFTGTTTFAMKDYGIKMDLGPASANVELDLVVEGVRK.

The first 22 residues, 1 to 22, serve as a signal peptide directing secretion; that stretch reads MKKQLLAALIGGFLLAPMAASA.

The protein belongs to the UPF0312 family. Type 1 subfamily.

It is found in the periplasm. The polypeptide is UPF0312 protein Shewmr7_1249 (Shewanella sp. (strain MR-7)).